The sequence spans 321 residues: Glucokinase (321 aa).

An ATP-binding site is contributed by 8-13 (GDVGGT).

The protein belongs to the bacterial glucokinase family.

It localises to the cytoplasm. It catalyses the reaction D-glucose + ATP = D-glucose 6-phosphate + ADP + H(+). This chain is Glucokinase, found in Salmonella typhi.